A 447-amino-acid polypeptide reads, in one-letter code: tRNA-2-methylthio-N(6)-dimethylallyladenosine synthase (447 aa).

The 117-residue stretch at 14 to 130 folds into the MTTase N-terminal domain; it reads KKVYIRTFGC…LPAMIANAGQ (117 aa). [4Fe-4S] cluster contacts are provided by Cys-23, Cys-59, Cys-93, Cys-166, Cys-170, and Cys-173. Residues 152–382 enclose the Radical SAM core domain; the sequence is RSGTISAFIP…IALQGSISGE (231 aa). The TRAM domain maps to 385 to 447; it reads AAEVGAVVEV…TPATLIGTPA (63 aa).

Belongs to the methylthiotransferase family. MiaB subfamily. As to quaternary structure, monomer. It depends on [4Fe-4S] cluster as a cofactor.

The protein resides in the cytoplasm. It catalyses the reaction N(6)-dimethylallyladenosine(37) in tRNA + (sulfur carrier)-SH + AH2 + 2 S-adenosyl-L-methionine = 2-methylsulfanyl-N(6)-dimethylallyladenosine(37) in tRNA + (sulfur carrier)-H + 5'-deoxyadenosine + L-methionine + A + S-adenosyl-L-homocysteine + 2 H(+). In terms of biological role, catalyzes the methylthiolation of N6-(dimethylallyl)adenosine (i(6)A), leading to the formation of 2-methylthio-N6-(dimethylallyl)adenosine (ms(2)i(6)A) at position 37 in tRNAs that read codons beginning with uridine. The protein is tRNA-2-methylthio-N(6)-dimethylallyladenosine synthase of Chlorobium phaeobacteroides (strain BS1).